Here is a 173-residue protein sequence, read N- to C-terminus: Transcription factor E (173 aa).

Residues 3–86 enclose the HTH TFE/IIEalpha-type domain; it reads DDPLVKSLLT…SWKFEEQEVI (84 aa).

This sequence belongs to the TFE family. As to quaternary structure, monomer. Interaction with RNA polymerase subunits RpoF and RpoE is necessary for Tfe stimulatory transcription activity. Able to interact with Tbp and RNA polymerase in the absence of DNA promoter. Interacts both with the preinitiation and elongation complexes.

Functionally, transcription factor that plays a role in the activation of archaeal genes transcribed by RNA polymerase. Facilitates transcription initiation by enhancing TATA-box recognition by TATA-box-binding protein (Tbp), and transcription factor B (Tfb) and RNA polymerase recruitment. Not absolutely required for transcription in vitro, but particularly important in cases where Tbp or Tfb function is not optimal. It dynamically alters the nucleic acid-binding properties of RNA polymerases by stabilizing the initiation complex and destabilizing elongation complexes. Seems to translocate with the RNA polymerase following initiation and acts by binding to the non template strand of the transcription bubble in elongation complexes. The protein is Transcription factor E of Methanobrevibacter smithii (strain ATCC 35061 / DSM 861 / OCM 144 / PS).